A 343-amino-acid chain; its full sequence is Dihydroorotase (343 aa).

Zn(2+) is bound by residues His-14 and His-16. Substrate contacts are provided by residues 16–18 and Asn-42; that span reads HLR. Zn(2+) contacts are provided by Lys-99, His-136, and His-174. At Lys-99 the chain carries N6-carboxylysine. His-136 lines the substrate pocket. Residue Leu-219 coordinates substrate. Residue Asp-247 participates in Zn(2+) binding. Asp-247 is a catalytic residue. Positions 251 and 263 each coordinate substrate.

It belongs to the metallo-dependent hydrolases superfamily. DHOase family. Class II DHOase subfamily. In terms of assembly, homodimer. It depends on Zn(2+) as a cofactor.

It catalyses the reaction (S)-dihydroorotate + H2O = N-carbamoyl-L-aspartate + H(+). It participates in pyrimidine metabolism; UMP biosynthesis via de novo pathway; (S)-dihydroorotate from bicarbonate: step 3/3. In terms of biological role, catalyzes the reversible cyclization of carbamoyl aspartate to dihydroorotate. This chain is Dihydroorotase, found in Psychromonas ingrahamii (strain DSM 17664 / CCUG 51855 / 37).